The following is a 568-amino-acid chain: Sesquiterpene synthase 14 (568 aa).

Mg(2+)-binding residues include Asp-319, Asp-323, Asp-463, and Glu-471. A DDXXD motif motif is present at residues 319 to 323; that stretch reads DDLYD.

Belongs to the terpene synthase family. Tpsa subfamily. Mg(2+) is required as a cofactor. It depends on Mn(2+) as a cofactor. As to expression, mostly expressed in roots, to a lower extent in flowers and, at low levels, in fruits.

It carries out the reaction (2Z,6Z)-farnesyl diphosphate = (E)-alpha-bisabolene + diphosphate. The enzyme catalyses (2Z,6Z)-farnesyl diphosphate = beta-bisabolene + diphosphate. The catalysed reaction is (2E,6E)-farnesyl diphosphate = beta-bisabolene + diphosphate. It catalyses the reaction (2E,6E)-farnesyl diphosphate = (Z)-gamma-bisabolene + diphosphate. It carries out the reaction (2E,6E)-farnesyl diphosphate = (E)-gamma-bisabolene + diphosphate. The enzyme catalyses (2Z,6Z)-farnesyl diphosphate = (E)-gamma-bisabolene + diphosphate. It participates in secondary metabolite biosynthesis; terpenoid biosynthesis. Functionally, sesquiterpene synthase involved in the biosynthesis of volatile compounds. Mediates the conversion of (2E,6E)-farnesyl diphosphate ((EE)-FPP) into beta-bisabolene, and of (2Z,6Z)-farnesyl diphosphate ((ZZ)-FPP) into alpha-bisabolene, but also smaller amounts of (Z)-gamma-bisabolene, (E)-gamma-bisabolene and nerolidol. This chain is Sesquiterpene synthase 14, found in Solanum lycopersicum (Tomato).